A 185-amino-acid polypeptide reads, in one-letter code: Elongation factor P 1 (185 aa).

The protein belongs to the elongation factor P family.

The protein resides in the cytoplasm. It participates in protein biosynthesis; polypeptide chain elongation. In terms of biological role, involved in peptide bond synthesis. Stimulates efficient translation and peptide-bond synthesis on native or reconstituted 70S ribosomes in vitro. Probably functions indirectly by altering the affinity of the ribosome for aminoacyl-tRNA, thus increasing their reactivity as acceptors for peptidyl transferase. This chain is Elongation factor P 1 (efp1), found in Chlamydia trachomatis serovar D (strain ATCC VR-885 / DSM 19411 / UW-3/Cx).